The chain runs to 168 residues: Shikimate kinase (168 aa).

ATP is bound at residue 12–17 (GAGKST). S16 serves as a coordination point for Mg(2+). Residues D34, R58, and G80 each contribute to the substrate site. R117 lines the ATP pocket. Substrate is bound at residue R136. R153 provides a ligand contact to ATP.

The protein belongs to the shikimate kinase family. As to quaternary structure, monomer. Mg(2+) serves as cofactor.

It localises to the cytoplasm. The enzyme catalyses shikimate + ATP = 3-phosphoshikimate + ADP + H(+). Its pathway is metabolic intermediate biosynthesis; chorismate biosynthesis; chorismate from D-erythrose 4-phosphate and phosphoenolpyruvate: step 5/7. Its function is as follows. Catalyzes the specific phosphorylation of the 3-hydroxyl group of shikimic acid using ATP as a cosubstrate. This chain is Shikimate kinase, found in Rhodococcus jostii (strain RHA1).